We begin with the raw amino-acid sequence, 439 residues long: Packaging protein 1 (439 aa).

The span at 1 to 23 shows a compositional bias: polar residues; it reads MSTQIPARQETYDPSQSSGTKTP. The segment at 1 to 42 is disordered; sequence MSTQIPARQETYDPSQSSGTKTPSHPYDGNPTRSYPKRNAGK. An ATP-binding site is contributed by 151–158; it reads GPTGSGKS. Residues 419 to 439 form a DNA-binding region; the sequence is ERNPKLTDLEKLSPPGTFQET.

This sequence belongs to the adenoviridae packaging protein 1 family. Homodimer. Part of a genome packaging complex composed of packaging proteins 1, 2 and 3; this complex specifically binds to the packaging sequence on the left end of viral genomic DNA and performs packaging of the viral genome. Interacts with protein 33K.

The protein localises to the virion. Its subcellular location is the host nucleus. It localises to the host nucleoplasm. It is found in the host nucleolus. Functionally, component of the packaging machinery which encapsidates the viral DNA into preformed capsids and transcriptional activator of the viral major late promoter (MLP). Binds, along with packaging proteins 2 and 3, to the specific packaging sequence on the left end of viral genomic DNA and displays ATPase activity thereby providing the power stroke of the packaging machinery. The activity of packaging protein IVa2 is stimulated by protein 33K which acts as a terminase. May be the protein that pumps DNA into the capsid powered by ATP hydrolysis. Specifically binds to the 5'-CG-3' nucleotides of the repeats making up the packaging sequence. Component of the DEF-A and DEF-B transcription factors that bind downstream elements of the major late promoter (MLP), and stimulate transcription from the MLP after initiation of viral DNA replication. DEF-A is a heterodimer packaging proteins 1 and 2 and DEF-B is a homodimer of packaging protein 1. This chain is Packaging protein 1, found in Fowl adenovirus A serotype 1 (strain CELO / Phelps) (FAdV-1).